The following is a 299-amino-acid chain: 4-diphosphocytidyl-2-C-methyl-D-erythritol kinase (299 aa).

The active site involves Lys-18. An ATP-binding site is contributed by 104 to 114 (PIASGIGGGSS). The active site involves Asp-146.

The protein belongs to the GHMP kinase family. IspE subfamily.

It carries out the reaction 4-CDP-2-C-methyl-D-erythritol + ATP = 4-CDP-2-C-methyl-D-erythritol 2-phosphate + ADP + H(+). It participates in isoprenoid biosynthesis; isopentenyl diphosphate biosynthesis via DXP pathway; isopentenyl diphosphate from 1-deoxy-D-xylulose 5-phosphate: step 3/6. Its function is as follows. Catalyzes the phosphorylation of the position 2 hydroxy group of 4-diphosphocytidyl-2C-methyl-D-erythritol. This Brucella melitensis biotype 1 (strain ATCC 23456 / CCUG 17765 / NCTC 10094 / 16M) protein is 4-diphosphocytidyl-2-C-methyl-D-erythritol kinase.